The chain runs to 406 residues: Acetylornithine/succinyldiaminopimelate aminotransferase (406 aa).

Pyridoxal 5'-phosphate-binding positions include 108 to 109 (GT) and Phe141. A N(2)-acetyl-L-ornithine-binding site is contributed by Arg144. 226–229 (DEVQ) is a pyridoxal 5'-phosphate binding site. Lys255 bears the N6-(pyridoxal phosphate)lysine mark. Ser283 is a binding site for N(2)-acetyl-L-ornithine. Position 284 (Thr284) interacts with pyridoxal 5'-phosphate.

This sequence belongs to the class-III pyridoxal-phosphate-dependent aminotransferase family. ArgD subfamily. In terms of assembly, homodimer. The cofactor is pyridoxal 5'-phosphate.

It is found in the cytoplasm. The enzyme catalyses N(2)-acetyl-L-ornithine + 2-oxoglutarate = N-acetyl-L-glutamate 5-semialdehyde + L-glutamate. The catalysed reaction is N-succinyl-(2S,6S)-2,6-diaminopimelate + 2-oxoglutarate = (S)-2-succinylamino-6-oxoheptanedioate + L-glutamate. The protein operates within amino-acid biosynthesis; L-arginine biosynthesis; N(2)-acetyl-L-ornithine from L-glutamate: step 4/4. It participates in amino-acid biosynthesis; L-lysine biosynthesis via DAP pathway; LL-2,6-diaminopimelate from (S)-tetrahydrodipicolinate (succinylase route): step 2/3. Functionally, involved in both the arginine and lysine biosynthetic pathways. This chain is Acetylornithine/succinyldiaminopimelate aminotransferase, found in Escherichia coli O6:H1 (strain CFT073 / ATCC 700928 / UPEC).